We begin with the raw amino-acid sequence, 725 residues long: Catalase-peroxidase (725 aa).

Residues 88–211 (WHSAGTYRIQ…LAASEMGLIY (124 aa)) constitute a cross-link (tryptophyl-tyrosyl-methioninium (Trp-Tyr) (with M-237)). H89 acts as the Proton acceptor in catalysis. The tryptophyl-tyrosyl-methioninium (Tyr-Met) (with W-88) cross-link spans 211–237 (YVNPEGPGREPDPLKAAQQIRETFKRM). H252 provides a ligand contact to heme b.

It belongs to the peroxidase family. Peroxidase/catalase subfamily. Homodimer or homotetramer. Heme b is required as a cofactor. Formation of the three residue Trp-Tyr-Met cross-link is important for the catalase, but not the peroxidase activity of the enzyme.

The enzyme catalyses H2O2 + AH2 = A + 2 H2O. It catalyses the reaction 2 H2O2 = O2 + 2 H2O. Functionally, bifunctional enzyme with both catalase and broad-spectrum peroxidase activity. This is Catalase-peroxidase from Symbiobacterium thermophilum (strain DSM 24528 / JCM 14929 / IAM 14863 / T).